A 137-amino-acid chain; its full sequence is 2-iminobutanoate/2-iminopropanoate deaminase (137 aa).

S2 is subject to N-acetylserine. K13, K60, and K67 each carry N6-succinyllysine. Phosphothreonine is present on T74.

The protein belongs to the RutC family. Homotrimer. Interacts with YTHDF2. Liver and kidney.

The protein localises to the cytoplasm. The protein resides in the nucleus. It is found in the peroxisome. Its subcellular location is the mitochondrion. It carries out the reaction 2-iminobutanoate + H2O = 2-oxobutanoate + NH4(+). It catalyses the reaction 2-iminopropanoate + H2O = pyruvate + NH4(+). Catalyzes the hydrolytic deamination of enamine/imine intermediates that form during the course of normal metabolism. May facilitate the release of ammonia from these potentially toxic reactive metabolites, reducing their impact on cellular components. It may act on enamine/imine intermediates formed by several types of pyridoxal-5'-phosphate-dependent dehydratases including L-threonine dehydratase. In terms of biological role, also promotes endoribonucleolytic cleavage of some transcripts by promoting recruitment of the ribonuclease P/MRP complex. Acts by bridging YTHDF2 and the ribonuclease P/MRP complex. RIDA/HRSP12 binds to N6-methyladenosine (m6A)-containing mRNAs containing a 5'-GGUUC-3' motif: cooperative binding of RIDA/HRSP12 and YTHDF2 to such transcripts lead to recruitment of the ribonuclease P/MRP complex and subsequent endoribonucleolytic cleavage. This Rattus norvegicus (Rat) protein is 2-iminobutanoate/2-iminopropanoate deaminase.